Here is a 306-residue protein sequence, read N- to C-terminus: Ribonuclease Z (306 aa).

His63, His65, Asp67, His68, His140, Asp211, and His269 together coordinate Zn(2+). Asp67 (proton acceptor) is an active-site residue.

Belongs to the RNase Z family. Homodimer. The cofactor is Zn(2+).

It carries out the reaction Endonucleolytic cleavage of RNA, removing extra 3' nucleotides from tRNA precursor, generating 3' termini of tRNAs. A 3'-hydroxy group is left at the tRNA terminus and a 5'-phosphoryl group is left at the trailer molecule.. In terms of biological role, zinc phosphodiesterase, which displays some tRNA 3'-processing endonuclease activity. Probably involved in tRNA maturation, by removing a 3'-trailer from precursor tRNA. The protein is Ribonuclease Z of Listeria monocytogenes serotype 4a (strain HCC23).